The sequence spans 264 residues: Protein Saci_1508 (264 aa).

It belongs to the CinA family.

This chain is Protein Saci_1508, found in Sulfolobus acidocaldarius (strain ATCC 33909 / DSM 639 / JCM 8929 / NBRC 15157 / NCIMB 11770).